We begin with the raw amino-acid sequence, 567 residues long: Microtubule-associated protein 70-1 (567 aa).

The stretch at 38-341 forms a coiled coil; it reads VRVELTRLEN…AARSEAQLKD (304 aa). The required for targeting to microtubules stretch occupies residues 220–440; that stretch reads ILDRMHRQKV…SGMNVSTDSS (221 aa). 2 disordered regions span residues 425-457 and 534-567; these read KGHV…EFTS and LEKE…ARNM. Over residues 440-453 the composition is skewed to basic and acidic residues; it reads SEDKESNNSDEKAN. The stretch at 516-545 forms a coiled coil; it reads KKRRMEVAAMEKEMAALRLEKEQDNKAKRF.

This sequence belongs to the MAP70 family.

The protein resides in the cytoplasm. It is found in the cytoskeleton. In terms of biological role, plant-specific protein that interact with microtubules. The sequence is that of Microtubule-associated protein 70-1 (MAP70.1) from Oryza sativa subsp. japonica (Rice).